We begin with the raw amino-acid sequence, 757 residues long: Dapper homolog 2 (757 aa).

The segment at 1–281 (MWAPSGQGPA…QSPLFALPKE (281 aa)) is inhibition of Nodal signaling. Positions 55–107 (RGQELRLEAALTALREQLSRLRRQDAGLKTHLDQLDQQISELQLDVSRSSCEA) form a coiled coil. Disordered regions lie at residues 486-540 (RRRV…CSES), 584-684 (RWQS…EGCF), and 696-728 (AEAG…PPVP). 2 stretches are compositionally biased toward basic and acidic residues: residues 505-516 (ERQRVTERDPSR) and 631-644 (ACAR…EHSA). Over residues 645–656 (DCTSLYHSTIAE) the composition is skewed to polar residues. The segment covering 664–673 (SDHTANRFGD) has biased composition (basic and acidic residues). The short motif at 754-757 (MTMV) is the PDZ-binding element.

Belongs to the dapper family. In terms of assembly, can form homodimers and heterodimers with DACT1 or DACT3. Interacts with CSNK1D, PKA catalytic subunit, PKC-type kinase, CSNK2B, DVL1, DVL2, DVL3, VANGL1, VANGL2, TGFBR1, CTNNB1, CTNND2, CTNND1, LEF1, TCF7, TCF7L1 and HDAC1. In terms of tissue distribution, expressed in kidney (inner medullary collecting duct). Expressed in epidermal keratinocytes and hair follicles.

Functionally, involved in regulation of intracellular signaling pathways during development. Negatively regulates the Nodal signaling pathway, possibly by promoting the lysosomal degradation of Nodal receptors, such as TGFBR1. May be involved in control of the morphogenetic behavior of kidney ureteric bud cells by keeping cells epithelial and restraining their mesenchymal character. May play an inhibitory role in the re-epithelialization of skin wounds by attenuating TGF-beta signaling. This chain is Dapper homolog 2 (Dact2), found in Mus musculus (Mouse).